The following is a 237-amino-acid chain: Glutathione-independent glyoxalase HSP31 (237 aa).

Residues cysteine 138, histidine 139, and glutamate 170 contribute to the active site. Cysteine 138 carries the cysteine sulfinic acid (-SO2H) modification.

This sequence belongs to the peptidase C56 family. HSP31-like subfamily. Homodimer. Cys-138 is easily oxidized to sulfinic acid.

The protein localises to the cytoplasm. Its subcellular location is the P-body. It catalyses the reaction methylglyoxal + H2O = (R)-lactate + H(+). Its function is as follows. Catalyzes the conversion of methylglyoxal (MG) to D-lactate in a single glutathione (GSH)-independent step. May play a role in detoxifying endogenously produced glyoxals. Involved in protection against reactive oxygen species (ROS). Important for viability in stationary phase. May negatively regulate TORC1 in response to nutrient limitation. The sequence is that of Glutathione-independent glyoxalase HSP31 from Saccharomyces cerevisiae (strain ATCC 204508 / S288c) (Baker's yeast).